The following is a 225-amino-acid chain: Glutathione S-transferase Mu 3 (225 aa).

The GST N-terminal domain occupies 5-92; that stretch reads SSMVLGYWDI…YIARKHNMCG (88 aa). Glutathione is bound by residues 11-12, 50-54, and 63-64; these read YW, WLDVK, and NL. A Glycyl lysine isopeptide (Lys-Gly) (interchain with G-Cter in SUMO2) cross-link involves residue K54. A Glycyl lysine isopeptide (Lys-Gly) (interchain with G-Cter in SUMO2) cross-link involves residue K73. 76-77 lines the glutathione pocket; sequence QS. Residues 94–212 form the GST C-terminal domain; that stretch reads TEEEKIRVDI…QSDQFFKMPI (119 aa). Substrate is bound at residue Y120.

Belongs to the GST superfamily. Mu family. Homodimer.

The protein resides in the cytoplasm. The enzyme catalyses RX + glutathione = an S-substituted glutathione + a halide anion + H(+). Conjugation of reduced glutathione to a wide number of exogenous and endogenous hydrophobic electrophiles. May govern uptake and detoxification of both endogenous compounds and xenobiotics at the testis and brain blood barriers. In Macaca fuscata fuscata (Japanese macaque), this protein is Glutathione S-transferase Mu 3 (GSTM3).